A 301-amino-acid chain; its full sequence is ATP synthase gamma chain (301 aa).

The protein belongs to the ATPase gamma chain family. As to quaternary structure, F-type ATPases have 2 components, CF(1) - the catalytic core - and CF(0) - the membrane proton channel. CF(1) has five subunits: alpha(3), beta(3), gamma(1), delta(1), epsilon(1). CF(0) has three main subunits: a, b and c.

The protein resides in the cell inner membrane. In terms of biological role, produces ATP from ADP in the presence of a proton gradient across the membrane. The gamma chain is believed to be important in regulating ATPase activity and the flow of protons through the CF(0) complex. This is ATP synthase gamma chain from Helicobacter pylori (strain G27).